A 369-amino-acid polypeptide reads, in one-letter code: Probable L-tyrosine/L-aspartate decarboxylase (369 aa).

Position 224 is an N6-(pyridoxal phosphate)lysine (Lys-224).

Belongs to the group II decarboxylase family. MfnA subfamily. Requires pyridoxal 5'-phosphate as cofactor.

The catalysed reaction is L-tyrosine + H(+) = tyramine + CO2. It carries out the reaction L-aspartate + H(+) = beta-alanine + CO2. The protein operates within cofactor biosynthesis; methanofuran biosynthesis. Its pathway is cofactor biosynthesis; coenzyme A biosynthesis. Catalyzes the decarboxylation of L-tyrosine to produce tyramine for methanofuran biosynthesis. Can also catalyze the decarboxylation of L-aspartate to produce beta-alanine for coenzyme A (CoA) biosynthesis. The polypeptide is Probable L-tyrosine/L-aspartate decarboxylase (Methanospirillum hungatei JF-1 (strain ATCC 27890 / DSM 864 / NBRC 100397 / JF-1)).